The following is a 284-amino-acid chain: Sulfotransferase 4A1 (284 aa).

Thr-8, Thr-11, and Thr-205 each carry phosphothreonine.

It belongs to the sulfotransferase 1 family. Expressed in brain, cerebellum and hypothalamus. Not detected in pancreas, liver, lung, intestine, kidney, uterus, adrenal gland, thymus, spleen, epididymis, testicle, and heart.

The protein localises to the cytoplasm. Atypical sulfotransferase family member with very low affinity for 3'-phospho-5'-adenylyl sulfate (PAPS) and very low catalytic activity towards L-triiodothyronine, thyroxine, estrone, p-nitrophenol, 2-naphthylamine, and 2-beta-naphthol. May have a role in the metabolism of drugs and neurotransmitters in the CNS. This Mus musculus (Mouse) protein is Sulfotransferase 4A1 (Sult4a1).